The sequence spans 129 residues: Follitropin subunit beta (129 aa).

A signal peptide spans 1–20 (MKTLQFFFLFCCWKAICCNS). Intrachain disulfides connect Cys21-Cys69, Cys35-Cys84, Cys38-Cys122, Cys46-Cys100, Cys50-Cys102, and Cys105-Cys112. N-linked (GlcNAc...) asparagine glycosylation is found at Asn25 and Asn42.

It belongs to the glycoprotein hormones subunit beta family. As to quaternary structure, heterodimer. The active follitropin is a heterodimer composed of an alpha chain/CGA shared with other hormones and a unique beta chain/FSHB shown here.

It localises to the secreted. Its function is as follows. Together with the alpha chain CGA constitutes follitropin, the follicle-stimulating hormone, and provides its biological specificity to the hormone heterodimer. Binds FSHR, a G protein-coupled receptor, on target cells to activate downstream signaling pathways. Follitropin is involved in follicle development and spermatogenesis in reproductive organs. In Pan troglodytes (Chimpanzee), this protein is Follitropin subunit beta (FSHB).